The primary structure comprises 78 residues: Acyl carrier protein (78 aa).

Residues Ala-4–Lys-78 form the Carrier domain. Ser-39 carries the post-translational modification O-(pantetheine 4'-phosphoryl)serine.

The protein belongs to the acyl carrier protein (ACP) family. 4'-phosphopantetheine is transferred from CoA to a specific serine of apo-ACP by AcpS. This modification is essential for activity because fatty acids are bound in thioester linkage to the sulfhydryl of the prosthetic group.

The protein localises to the cytoplasm. It functions in the pathway lipid metabolism; fatty acid biosynthesis. Its function is as follows. Carrier of the growing fatty acid chain in fatty acid biosynthesis. This is Acyl carrier protein from Chlorobium limicola (strain DSM 245 / NBRC 103803 / 6330).